The following is a 498-amino-acid chain: Galactose-1-phosphate uridylyltransferase (498 aa).

The protein belongs to the galactose-1-phosphate uridylyltransferase type 2 family.

The protein resides in the cytoplasm. The enzyme catalyses alpha-D-galactose 1-phosphate + UDP-alpha-D-glucose = alpha-D-glucose 1-phosphate + UDP-alpha-D-galactose. The protein operates within carbohydrate metabolism; galactose metabolism. This is Galactose-1-phosphate uridylyltransferase from Clostridium perfringens (strain 13 / Type A).